Here is a 123-residue protein sequence, read N- to C-terminus: Large ribosomal subunit protein bL19 (123 aa).

It belongs to the bacterial ribosomal protein bL19 family.

This protein is located at the 30S-50S ribosomal subunit interface and may play a role in the structure and function of the aminoacyl-tRNA binding site. The polypeptide is Large ribosomal subunit protein bL19 (Acinetobacter baylyi (strain ATCC 33305 / BD413 / ADP1)).